A 96-amino-acid polypeptide reads, in one-letter code: Transcription and mRNA export factor SUS1 (96 aa).

K68 participates in a covalent cross-link: Glycyl lysine isopeptide (Lys-Gly) (interchain with G-Cter in ubiquitin).

It belongs to the ENY2 family. As to quaternary structure, component of the nuclear pore complex (NPC)-associated TREX-2 complex (transcription and export complex 2), composed of at least SUS1, SAC3, THP1, SEM1, and CDC31. TREX-2 contains 2 SUS1 chains. The TREX-2 complex interacts with the nucleoporin NUP1. Component of the 1.8 MDa SAGA transcription coactivator-HAT complex. SAGA is built of 5 distinct domains with specialized functions. Within the SAGA complex, SUS1, SGF11, SGF73 and UBP8 form an additional subcomplex of SAGA called the DUB module (deubiquitination module). Interacts directly with THP1, SAC3, SGF11, and with the RNA polymerase II.

The protein localises to the nucleus. The protein resides in the nucleoplasm. It is found in the cytoplasm. Its subcellular location is the P-body. Its function is as follows. Involved in mRNA export coupled transcription activation by association with both the TREX-2 and the SAGA complexes. At the promoters, SAGA is required for recruitment of the basal transcription machinery. It influences RNA polymerase II transcriptional activity through different activities such as TBP interaction and promoter selectivity, interaction with transcription activators, and chromatin modification through histone acetylation and deubiquitination. Within the SAGA complex, participates in a subcomplex required for deubiquitination of H2B and for the maintenance of steady-state H3 methylation levels. The TREX-2 complex functions in docking export-competent ribonucleoprotein particles (mRNPs) to the nuclear entrance of the nuclear pore complex (nuclear basket). TREX-2 participates in mRNA export and accurate chromatin positioning in the nucleus by tethering genes to the nuclear periphery. May also be involved in cytoplasmic mRNA decay by interaction with components of P-bodies. The sequence is that of Transcription and mRNA export factor SUS1 from Saccharomyces cerevisiae (strain RM11-1a) (Baker's yeast).